The chain runs to 287 residues: Probable ABC transporter extracellular-binding protein YckB (287 aa).

The first 24 residues, 1–24 (MKSFMHSKAVIFSFTMAFFLILAA), serve as a signal peptide directing secretion. C25 carries N-palmitoyl cysteine lipidation. Residue C25 is the site of S-diacylglycerol cysteine attachment.

This sequence belongs to the bacterial solute-binding protein 3 family.

The protein resides in the cell membrane. Probably part of a binding-protein-dependent transport system. The chain is Probable ABC transporter extracellular-binding protein YckB (yckB) from Bacillus subtilis (strain 168).